A 392-amino-acid chain; its full sequence is 8-amino-7-oxononanoate synthase (392 aa).

R18 contributes to the substrate binding site. 105–106 is a pyridoxal 5'-phosphate binding site; the sequence is GY. H130 lines the substrate pocket. Residues S177, H205, and T234 each contribute to the pyridoxal 5'-phosphate site. K237 bears the N6-(pyridoxal phosphate)lysine mark. T351 serves as a coordination point for substrate.

This sequence belongs to the class-II pyridoxal-phosphate-dependent aminotransferase family. BioF subfamily. In terms of assembly, homodimer. It depends on pyridoxal 5'-phosphate as a cofactor.

It catalyses the reaction 6-carboxyhexanoyl-[ACP] + L-alanine + H(+) = (8S)-8-amino-7-oxononanoate + holo-[ACP] + CO2. The protein operates within cofactor biosynthesis; biotin biosynthesis. Functionally, catalyzes the decarboxylative condensation of pimeloyl-[acyl-carrier protein] and L-alanine to produce 8-amino-7-oxononanoate (AON), [acyl-carrier protein], and carbon dioxide. This Thioalkalivibrio sulfidiphilus (strain HL-EbGR7) protein is 8-amino-7-oxononanoate synthase.